A 405-amino-acid chain; its full sequence is uncharacterized protein (405 aa).

The next 13 membrane-spanning stretches (helical) occupy residues 19–39, 48–68, 85–105, 106–126, 129–149, 156–176, 178–198, 224–244, 252–272, 283–303, 309–329, 344–364, and 366–386; these read IVSIVMFNFASYLTIGLPLAV, MGFSAFWAGLIISLQYFATLL, IVVFGLCGCFLSGFGYLLADI, ASAWPMISLLLLGLGRVILGI, SFAGTGSTLWGVGVVGSLHIG, GIVTYGAMAMGAPLGVLCYAW, GLQGLALTVMGVALLAILLAL, GMALALASAGFGVIATFITLF, GAAFALTLFSVAFVGTRLLFP, VAMICFGVEIIGLLLVGTAAM, IGVLLTGMGFSLVFPALGVVA, TYTVFMDMSLGVTGPLAGLVM, and WAGVPVIYLAAAGLVAMALLL.

The protein belongs to the major facilitator superfamily. YhhS family.

It localises to the cell inner membrane. This is an uncharacterized protein from Salmonella paratyphi C (strain RKS4594).